Here is a 576-residue protein sequence, read N- to C-terminus: Trehalase (576 aa).

The first 20 residues, 1–20, serve as a signal peptide directing secretion; it reads MTWELHLLLLLGLGLRSQEA. Asn-75 is a glycosylation site (N-linked (GlcNAc...) asparagine). Substrate-binding positions include Arg-165, 172–173, Asn-209, and 218–220; these read WD and RSQ. An N-linked (GlcNAc...) asparagine glycan is attached at Asn-258. Substrate contacts are provided by residues 283–285 and Gly-316; that span reads RPE. Asp-318 serves as the catalytic Proton donor/acceptor. N-linked (GlcNAc...) asparagine glycosylation occurs at Asn-366. Residue Glu-511 is the Proton donor/acceptor of the active site. Substrate is bound at residue Glu-526. Ser-553 carries GPI-anchor amidated serine lipidation. Residues 554–576 constitute a propeptide, removed in mature form; the sequence is GTQLASLGPHCLVAALLLSLLLQ.

Belongs to the glycosyl hydrolase 37 family. Homodimer; disulfide-linked.

The protein resides in the cell membrane. The catalysed reaction is alpha,alpha-trehalose + H2O = alpha-D-glucose + beta-D-glucose. Intestinal trehalase is probably involved in the hydrolysis of ingested trehalose. This is Trehalase from Mus musculus (Mouse).